Here is a 144-residue protein sequence, read N- to C-terminus: Peroxisomal membrane protein PEX34 (144 aa).

The next 3 helical transmembrane spans lie at 18–30, 52–73, and 109–131; these read NIWS…LDFF, VWLC…KLCK, and TAAL…RLFK.

As to quaternary structure, homooligomer. Interacts with PEX11, PEX25 and PEX27.

The protein resides in the peroxisome membrane. In concert with the three peroxisome divisional factors, PEX11, PEX25 and PEX27, controls peroxisome morphology and abundance under conditions of peroxisome proliferation. Maintains mature peroxisomes in actively dividing cells. The chain is Peroxisomal membrane protein PEX34 (PEX34) from Saccharomyces cerevisiae (strain ATCC 204508 / S288c) (Baker's yeast).